The primary structure comprises 253 residues: Probable transcriptional regulatory protein Tlet_1011 (253 aa).

The protein belongs to the TACO1 family.

The protein resides in the cytoplasm. The chain is Probable transcriptional regulatory protein Tlet_1011 from Pseudothermotoga lettingae (strain ATCC BAA-301 / DSM 14385 / NBRC 107922 / TMO) (Thermotoga lettingae).